The following is a 417-amino-acid chain: Argininosuccinate synthase (417 aa).

Residue 9–17 (AYSGGLDTS) coordinates ATP. Residue Tyr87 participates in L-citrulline binding. Position 117 (Gly117) interacts with ATP. 3 residues coordinate L-aspartate: Thr119, Asn123, and Asp124. Asn123 contributes to the L-citrulline binding site. L-citrulline contacts are provided by Arg127, Ser175, Ser184, Glu260, and Tyr272.

It belongs to the argininosuccinate synthase family. Type 1 subfamily. As to quaternary structure, homotetramer.

It is found in the cytoplasm. The catalysed reaction is L-citrulline + L-aspartate + ATP = 2-(N(omega)-L-arginino)succinate + AMP + diphosphate + H(+). It functions in the pathway amino-acid biosynthesis; L-arginine biosynthesis; L-arginine from L-ornithine and carbamoyl phosphate: step 2/3. This chain is Argininosuccinate synthase, found in Oceanobacillus iheyensis (strain DSM 14371 / CIP 107618 / JCM 11309 / KCTC 3954 / HTE831).